The chain runs to 912 residues: Protein translocase subunit SecA (912 aa).

ATP-binding positions include glutamine 86, 104–108, and aspartate 494; that span reads GEGKT. The interval 860 to 912 is disordered; the sequence is EAPEKPAQLQYTAPGEDGASQTRVEGRSSGRSGNPAKAAQDGARKPAPKKKKR.

Belongs to the SecA family. As to quaternary structure, monomer and homodimer. Part of the essential Sec protein translocation apparatus which comprises SecA, SecYEG and auxiliary proteins SecDF. Other proteins may also be involved.

Its subcellular location is the cell membrane. The protein localises to the cytoplasm. It catalyses the reaction ATP + H2O + cellular proteinSide 1 = ADP + phosphate + cellular proteinSide 2.. Functionally, part of the Sec protein translocase complex. Interacts with the SecYEG preprotein conducting channel. Has a central role in coupling the hydrolysis of ATP to the transfer of proteins into and across the cell membrane, serving as an ATP-driven molecular motor driving the stepwise translocation of polypeptide chains across the membrane. This Arthrobacter sp. (strain FB24) protein is Protein translocase subunit SecA.